Here is a 509-residue protein sequence, read N- to C-terminus: Putative ATP-dependent RNA helicase QP509L (509 aa).

The Helicase ATP-binding domain occupies K110–P262. Residue L123–T130 participates in ATP binding. A DEAH box motif is present at residues D215–H218.

It belongs to the DEAD box helicase family. DEAH subfamily.

It carries out the reaction ATP + H2O = ADP + phosphate + H(+). This chain is Putative ATP-dependent RNA helicase QP509L, found in African swine fever virus (strain Badajoz 1971 Vero-adapted) (Ba71V).